The chain runs to 37 residues: Large ribosomal subunit protein bL36 (37 aa).

This sequence belongs to the bacterial ribosomal protein bL36 family.

The polypeptide is Large ribosomal subunit protein bL36 (Helicobacter pylori (strain ATCC 700392 / 26695) (Campylobacter pylori)).